The following is a 588-amino-acid chain: Adenine deaminase (588 aa).

The protein belongs to the metallo-dependent hydrolases superfamily. Adenine deaminase family. In terms of assembly, homodimer. Mn(2+) serves as cofactor.

It carries out the reaction adenine + H2O + H(+) = hypoxanthine + NH4(+). This is Adenine deaminase from Shigella boydii serotype 4 (strain Sb227).